Consider the following 67-residue polypeptide: Small ribosomal subunit protein bS21 (67 aa).

Belongs to the bacterial ribosomal protein bS21 family.

The sequence is that of Small ribosomal subunit protein bS21 from Desulfovibrio desulfuricans (strain ATCC 27774 / DSM 6949 / MB).